A 270-amino-acid polypeptide reads, in one-letter code: Undecaprenyl-diphosphatase (270 aa).

8 helical membrane-spanning segments follow: residues 1 to 21 (MDLF…FLPI), 39 to 59 (QGLV…MLYF), 87 to 107 (SHLV…GLAC), 114 to 134 (VARD…LLWW), 147 to 167 (ALSW…LIPG), 193 to 213 (FLMA…DLFA), 223 to 243 (FLGV…HGLL), and 250 to 270 (TMTP…ATLG).

The protein belongs to the UppP family.

The protein resides in the cell inner membrane. The enzyme catalyses di-trans,octa-cis-undecaprenyl diphosphate + H2O = di-trans,octa-cis-undecaprenyl phosphate + phosphate + H(+). Functionally, catalyzes the dephosphorylation of undecaprenyl diphosphate (UPP). Confers resistance to bacitracin. The chain is Undecaprenyl-diphosphatase from Magnetococcus marinus (strain ATCC BAA-1437 / JCM 17883 / MC-1).